Consider the following 231-residue polypeptide: DINGGGATLPQKLYQTSGVLTAGFAPYIGVGSGNGKAAFLTNDYTKLTATELSTYATNLQPTWGKLIQVPSVATSVAIPFRITDWSGISGAGRTGPITVVYRITYMSPDFAASTLAGLDDATKGVSPAPSNVSDAIAQVLPPNDPSAPLDVTNPDDGVAGVQPYPDSGYPILGFTNLIFSAFFTKAFFTKHFGDTNNNDDAITANRFVPLPDNWKTELSTYATNLQPTWGK.

The enzyme catalyses NAD(+) + (ADP-D-ribosyl)n-acceptor = nicotinamide + (ADP-D-ribosyl)n+1-acceptor + H(+).. Activity increases up to 5-6 times with Mg(2+) at 50 uM or higher ion concentration. 3-aminobenzamide (3-ABA) inhibits the activity by up to half and nicotinamide to a lesser extent. Zn(2+) inhibits the activity to half-maximal rate but at 500 uM concentration of the ion. Catalyzes auto- and hetero-ADP ribosylation and produces short oligomers by elongating the ADP-ribose chain (up to 6-mer). Binds DNA non-specifically but with high affinity. Forms very stable complexes with circular DNA wherein the circular DNA confers thermostability compared to linear DNA. The polypeptide is NAD(+) ADP-ribosyltransferase (Saccharolobus solfataricus (Sulfolobus solfataricus)).